We begin with the raw amino-acid sequence, 254 residues long: Small ribosomal subunit protein uS2 (254 aa).

This sequence belongs to the universal ribosomal protein uS2 family.

The chain is Small ribosomal subunit protein uS2 from Borrelia hermsii (strain HS1 / DAH).